We begin with the raw amino-acid sequence, 258 residues long: UPF0758 protein BamMC406_2419 (258 aa).

The segment at 13-42 is disordered; sequence CRDPADAPAAPARHTGPARPRKRRPRNWKP. The span at 31 to 42 shows a compositional bias: basic residues; the sequence is RPRKRRPRNWKP. Residues 136–258 enclose the MPN domain; that stretch reads QIDSPGAVED…TFSFARAGWL (123 aa). Positions 207, 209, and 220 each coordinate Zn(2+). Residues 207–220 carry the JAMM motif motif; the sequence is HNHPSGAVQPSAED.

It belongs to the UPF0758 family.

This is UPF0758 protein BamMC406_2419 from Burkholderia ambifaria (strain MC40-6).